The chain runs to 437 residues: MCAPLFQPAIIQSVLDLDVYKINMMQAAYRFYPQTQVRYELIVRSDDNLSDLVEEVREEINRLAELRFDAAQLAYLAEKAPYLTAEFLSYLETFRFHPQQQVSVGIFRTAQGDCQLRVTINGIWHETILYETLVMSIISELRNRRYWAQIPQSQLHKVLEDKLDFLDSELKRRNITNFRFSEMGTRRRFSFAAQKTMLDVLRARVPELLLGTSNYHLAQEFNLTPIGTVAHEWTMAHQALVAIQHSQRVALDKWLEAFNGSLGIALTDTIGIDAFLSDFDLDKATAYAGVRHDSGSPFVWGDKIIAHYESLGIDPTTKTLIFTDGLDFARALDICEYFAGRAQISFGIGTFLANDMGNWTNDKGTRYQPISMVVKMAECNGSPVAKISDEPEKAMCEDIFFLMNLKQRFGLEVDLDKAIETLKQMKRQQKKRIQSVA.

The residue at position 231 (His-231) is a Phosphohistidine; by autocatalysis.

This sequence belongs to the NAPRTase family. Post-translationally, transiently phosphorylated on a His residue during the reaction cycle. Phosphorylation strongly increases the affinity for substrates and increases the rate of nicotinate D-ribonucleotide production. Dephosphorylation regenerates the low-affinity form of the enzyme, leading to product release.

It carries out the reaction nicotinate + 5-phospho-alpha-D-ribose 1-diphosphate + ATP + H2O = nicotinate beta-D-ribonucleotide + ADP + phosphate + diphosphate. Its pathway is cofactor biosynthesis; NAD(+) biosynthesis; nicotinate D-ribonucleotide from nicotinate: step 1/1. Functionally, catalyzes the synthesis of beta-nicotinate D-ribonucleotide from nicotinate and 5-phospho-D-ribose 1-phosphate at the expense of ATP. In Vibrio vulnificus (strain CMCP6), this protein is Nicotinate phosphoribosyltransferase.